We begin with the raw amino-acid sequence, 358 residues long: Dynein axonemal assembly factor 10 (358 aa).

6 WD repeats span residues 64-106 (EKSK…SPVY), 116-155 (NAID…TPVV), 163-206 (ETKR…LRWE), 208-250 (NIRN…PSKG), 258-298 (AHKS…QRSK), and 320-358 (LSTQ…LNTV).

Interacts with PIH1D1; the interaction associates DNAAF10 with the R2TP complex. Interacts with several dynein axonemal assembly factors.

It localises to the dynein axonemal particle. Key assembly factor specifically required for the stability of axonemal dynein heavy chains in cytoplasm. This Danio rerio (Zebrafish) protein is Dynein axonemal assembly factor 10 (dnaaf10).